A 533-amino-acid polypeptide reads, in one-letter code: Tyrosinase (533 aa).

The first 18 residues, 1 to 18 (MFLAVLYCLLWSFQISDG), serve as a signal peptide directing secretion. The Lumenal, melanosome portion of the chain corresponds to 19 to 476 (HFPRACASSK…YLEQASRIWP (458 aa)). N86, N111, and N161 each carry an N-linked (GlcNAc...) asparagine glycan. Cu cation is bound by residues H180, H202, and H211. N230 and N337 each carry an N-linked (GlcNAc...) asparagine glycan. 2 residues coordinate Cu cation: H363 and H367. A glycan (N-linked (GlcNAc...) asparagine) is linked at N371. Residue H390 participates in Cu cation binding. A helical membrane pass occupies residues 477 to 497 (WLLGAALVGAVIAAALSGLSS). The Cytoplasmic segment spans residues 498-533 (RLCLQKKKKKKQPQEERQPLLMDKDDYHSLLYQSHL).

This sequence belongs to the tyrosinase family. In terms of assembly, forms an OPN3-dependent complex with DCT in response to blue light in melanocytes. The cofactor is Cu(2+). In terms of processing, glycosylated. As to expression, expressed in the skin.

The protein resides in the melanosome membrane. It is found in the melanosome. It carries out the reaction 2 L-dopa + O2 = 2 L-dopaquinone + 2 H2O. The catalysed reaction is L-tyrosine + O2 = L-dopaquinone + H2O. The enzyme catalyses 2 5,6-dihydroxyindole-2-carboxylate + O2 = 2 indole-5,6-quinone-2-carboxylate + 2 H2O. In terms of biological role, this is a copper-containing oxidase that functions in the formation of pigments such as melanins and other polyphenolic compounds. Catalyzes the initial and rate limiting step in the cascade of reactions leading to melanin production from tyrosine. In addition to hydroxylating tyrosine to DOPA (3,4-dihydroxyphenylalanine), also catalyzes the oxidation of DOPA to DOPA-quinone, and possibly the oxidation of DHI (5,6-dihydroxyindole) to indole-5,6 quinone. The sequence is that of Tyrosinase (Tyr) from Mus musculus (Mouse).